The sequence spans 206 residues: Ras-related protein ralB-B (206 aa).

Position 21-28 (21-28 (GSGGVGKS)) interacts with GTP. An Effector region motif is present at residues 43-51 (YEPTKADSY). Residues 68–72 (DTAGQ) and 128–131 (NKSD) contribute to the GTP site. Over residues 180 to 189 (KMSENKDKNG) the composition is skewed to basic and acidic residues. Residues 180 to 206 (KMSENKDKNGKKSGKSKKGFKQRCCLL) form a disordered region. Basic residues predominate over residues 190–200 (KKSGKSKKGFK). Cysteine methyl ester is present on cysteine 203. The S-geranylgeranyl cysteine moiety is linked to residue cysteine 203. Residues 204 to 206 (CLL) constitute a propeptide, removed in mature form.

It belongs to the small GTPase superfamily. Ras family. Interacts with ralbp1 and rap1gds1.

It localises to the cell membrane. The protein resides in the midbody. The enzyme catalyses GTP + H2O = GDP + phosphate + H(+). Its function is as follows. Multifunctional GTPase involved in a variety of cellular processes including gene expression, cell migration, cell proliferation, oncogenic transformation and membrane trafficking. Accomplishes its multiple functions by interacting with distinct downstream effectors. Acts as a GTP sensor for GTP-dependent exocytosis of dense core vesicles. Required both to stabilize the assembly of the exocyst complex and to localize functional exocyst complexes to the leading edge of migrating cells. Required for suppression of apoptosis. In late stages of cytokinesis, upon completion of the bridge formation between dividing cells, mediates exocyst recruitment to the midbody to drive abscission. Regulates the actin cytoskeleton to play a role in gastrulation or neurulation. During the cleavage stages, the GTP-bound form induces a cortical reaction that affects the localization of pigment granules. Activated by the FGF pathway via ras and ral-GDS, but independently of raf. Directs ralbp1 to the plasma membrane. Involved in ligand-dependent receptor mediated endocytosis of the EGF and insulin receptors. This chain is Ras-related protein ralB-B (ralb-b), found in Xenopus laevis (African clawed frog).